The primary structure comprises 529 residues: G-protein coupled receptor 161 (529 aa).

Residues 1–30 (MSLNSSLSCRKELSNLTEEEGGEGGVIITQ) lie on the Extracellular side of the membrane. 2 N-linked (GlcNAc...) asparagine glycosylation sites follow: asparagine 4 and asparagine 15. The chain crosses the membrane as a helical span at residues 31-51 (FIAIIVITIFVCLGNLVIVVT). At 52–64 (LYKKSYLLTLSNK) the chain is on the cytoplasmic side. A helical transmembrane segment spans residues 65-85 (FVFSLTLSNFLLSVLVLPFVV). Over 86-101 (TSSIRREWIFGVVWCN) the chain is Extracellular. Cysteine 100 and cysteine 178 are joined by a disulfide. The helical transmembrane segment at 102-123 (FSALLYLLISSASMLTLGVIAI) threads the bilayer. The Cytoplasmic segment spans residues 124-143 (DRYYAVLYPMVYPMKITGNR). Residues 144–164 (AVMALVYIWLHSLIGCLPPLF) form a helical membrane-spanning segment. Topologically, residues 165–190 (GWSSVEFDEFKWMCVAAWHREPGYTA) are extracellular. The chain crosses the membrane as a helical span at residues 191–211 (FWQIWCALFPFLVMLVCYGFI). Over 212-269 (FRVARVKARKVHCGTVVIVEEDAQRTGRKNSSTSTSSSGSRRNAFQGVVYSANQCKAL) the chain is Cytoplasmic. Residues 270 to 290 (ITILVVLGAFMVTWGPYMVVI) form a helical membrane-spanning segment. Over 291 to 306 (ASEALWGKSSVSPSLE) the chain is Extracellular. Residues 307 to 327 (TWATWLSFASAVCHPLIYGLW) form a helical membrane-spanning segment. Residues 328–529 (NKTVRKELLG…EGDVLAAEQR (202 aa)) are Cytoplasmic-facing.

This sequence belongs to the G-protein coupled receptor 1 family.

It is found in the cell projection. The protein resides in the cilium membrane. It localises to the cell membrane. In terms of biological role, key negative regulator of Shh signaling, which promotes the processing of GLI3 into GLI3R during neural tube development. Recruited by TULP3 and the IFT-A complex to primary cilia and acts as a regulator of the PKA-dependent basal repression machinery in Shh signaling by increasing cAMP levels, leading to promote the PKA-dependent processing of GLI3 into GLI3R and repress the Shh signaling. In presence of SHH, it is removed from primary cilia and is internalized into recycling endosomes, preventing its activity and allowing activation of the Shh signaling. Its ligand is unknown. In Homo sapiens (Human), this protein is G-protein coupled receptor 161 (GPR161).